An 86-amino-acid chain; its full sequence is DNA replication protein 1 (86 aa).

Positions Leu38–Asn67 form a coiled coil.

Belongs to the phi29likevirus DNA replication protein 1 family. As to quaternary structure, homomultimer. Self-associates into large complexes forming long filamentous structures. Interacts (via N-terminus) with the primer terminal protein. Interacts with host FtsZ protein.

The protein localises to the host membrane. Protein that assembles into highly ordered structures and provides a specific site for viral DNA replication. Probably anchors the viral DNA replisome to the host membrane. The chain is DNA replication protein 1 (1) from Bacillus subtilis (Bacteriophage phi-29).